The chain runs to 3305 residues: Microtubule-actin cross-linking factor 1, isoforms 6/7 (3305 aa).

Disordered regions lie at residues 1–24, 108–140, 152–202, 239–272, 333–381, 941–1007, and 2865–2896; these read MGKP…GEDE, VQKS…MPPN, LSEV…KSVD, AAAS…GFSE, EEWE…VAVS, EPAI…PEWS, and SVEP…MPIL. Residues 120–129 are compositionally biased toward basic and acidic residues; the sequence is PNAERKDNVN. EF-hand domains are found at residues 2958 to 2993 and 2994 to 3029; these read HKKS…SKFP and TTKL…NKDA. 10 residues coordinate Ca(2+): aspartate 2971, aspartate 2973, aspartate 2975, lysine 2977, glutamate 2982, aspartate 3007, aspartate 3009, aspartate 3011, tyrosine 3013, and glutamate 3018. The GAR domain maps to 3034–3106; sequence TDADKIEDEV…EFLVKNDPCR (73 aa). Residues 3122 to 3305 are disordered; sequence PEGASQGMTP…ASPRTPGPKR (184 aa). Positions 3142-3176 are enriched in low complexity; that stretch reads SSRAASPTRSSSSASQSNHSCTSMPSSPATPASGT. Polar residues predominate over residues 3193-3212; sequence FHSSRTSLAGDTSNSSSPAS. Over residues 3227 to 3241 the composition is skewed to low complexity; that stretch reads SRPGSRAGSRAGSRA. Polar residues predominate over residues 3256–3266; sequence ETQSACSDTSE. The segment covering 3267-3278 has biased composition (low complexity); that stretch reads SSAAGGQGSSRR.

Its subcellular location is the cytoplasm. It localises to the cytoskeleton. The sequence is that of Microtubule-actin cross-linking factor 1, isoforms 6/7 from Mus musculus (Mouse).